Consider the following 162-residue polypeptide: Large ribosomal subunit protein eL24 (162 aa).

Disordered stretches follow at residues 64–83 (DIHA…PYSR) and 117–162 (ERIK…GGKR). Basic residues predominate over residues 71 to 81 (KKRRRTTKKPY). Basic and acidic residues predominate over residues 117–135 (ERIKKTKDEKKAKKAEVTK).

The protein belongs to the eukaryotic ribosomal protein eL24 family.

The protein localises to the cytoplasm. The protein is Large ribosomal subunit protein eL24 (RPL24) of Hordeum vulgare (Barley).